The following is a 393-amino-acid chain: Riboflavin biosynthesis protein RibBA (393 aa).

The tract at residues 1–200 (MQFDNIDSAL…IDDLIEYRKK (200 aa)) is DHBP synthase. Residues 27-28 (RE), aspartate 32, 139-143 (RNGHT), and glutamate 163 contribute to the D-ribulose 5-phosphate site. Mg(2+) is bound at residue glutamate 28. Histidine 142 provides a ligand contact to Mg(2+). The segment at 201–393 (LEPEIEFKAK…TKKIKMGHLI (193 aa)) is GTP cyclohydrolase II. Residue 249–253 (RLHSA) participates in GTP binding. Zn(2+) is bound by residues cysteine 254, cysteine 265, and cysteine 267. GTP is bound by residues glutamine 270, 291–293 (EGR), and threonine 313. Residue aspartate 325 is the Proton acceptor; for GTP cyclohydrolase activity of the active site. The active-site Nucleophile; for GTP cyclohydrolase activity is arginine 327. Residues serine 348 and lysine 353 each coordinate GTP.

In the N-terminal section; belongs to the DHBP synthase family. The protein in the C-terminal section; belongs to the GTP cyclohydrolase II family. Requires Mg(2+) as cofactor. The cofactor is Mn(2+). Zn(2+) is required as a cofactor.

It carries out the reaction D-ribulose 5-phosphate = (2S)-2-hydroxy-3-oxobutyl phosphate + formate + H(+). The enzyme catalyses GTP + 4 H2O = 2,5-diamino-6-hydroxy-4-(5-phosphoribosylamino)-pyrimidine + formate + 2 phosphate + 3 H(+). It functions in the pathway cofactor biosynthesis; riboflavin biosynthesis; 2-hydroxy-3-oxobutyl phosphate from D-ribulose 5-phosphate: step 1/1. Its pathway is cofactor biosynthesis; riboflavin biosynthesis; 5-amino-6-(D-ribitylamino)uracil from GTP: step 1/4. Catalyzes the conversion of D-ribulose 5-phosphate to formate and 3,4-dihydroxy-2-butanone 4-phosphate. Its function is as follows. Catalyzes the conversion of GTP to 2,5-diamino-6-ribosylamino-4(3H)-pyrimidinone 5'-phosphate (DARP), formate and pyrophosphate. This Staphylococcus aureus (strain COL) protein is Riboflavin biosynthesis protein RibBA.